We begin with the raw amino-acid sequence, 586 residues long: Asparagine synthetase [glutamine-hydrolyzing] 2 (586 aa).

Cys2 serves as the catalytic For GATase activity. The region spanning 2–185 is the Glutamine amidotransferase type-2 domain; sequence CGILAVLGCS…PGHLYSSKEK (184 aa). L-glutamine-binding positions include 50–54, 75–77, and Asp98; these read RLAIV and NGE. An Asparagine synthetase domain is found at 193-516; it reads PPWFSEAIPS…PQNSARLSVP (324 aa). ATP is bound by residues Leu231, Val267, and 341 to 342; that span reads SG.

The catalysed reaction is L-aspartate + L-glutamine + ATP + H2O = L-asparagine + L-glutamate + AMP + diphosphate + H(+). Its pathway is amino-acid biosynthesis; L-asparagine biosynthesis; L-asparagine from L-aspartate (L-Gln route): step 1/1. The chain is Asparagine synthetase [glutamine-hydrolyzing] 2 (AS2) from Lotus japonicus (Lotus corniculatus var. japonicus).